The chain runs to 458 residues: BTB/POZ domain-containing protein At5g41330 (458 aa).

Residues 11–72 (NVVSINVGGR…LRTGNLPARS (62 aa)) enclose the BTB domain. WD repeat units lie at residues 259-305 (DSAI…MVWE), 360-399 (LNER…LVGN), and 421-458 (SGEN…GISI).

It participates in protein modification; protein ubiquitination. Functionally, may act as a substrate-specific adapter of an E3 ubiquitin-protein ligase complex (CUL3-RBX1-BTB) which mediates the ubiquitination and subsequent proteasomal degradation of target proteins. The sequence is that of BTB/POZ domain-containing protein At5g41330 from Arabidopsis thaliana (Mouse-ear cress).